The sequence spans 1066 residues: MGTEDCDHEGRSVAAPVEVTALYATDGCVITSSLALLTNCLLGAEPLYIFSYDAYRSDAPNGPTGAPTEQERFEGSRALYRDAGGLNGDSFRVTFCLLGTEVGVTHHPKGRTRPMFVCRFERADDVAVLQDALGRGTPLLPAHVTATLDLEATFALHANIIMALTVAIVHNAPARIGSGSTAPLYEPGESMRSVVGRMSLGQRGLTTLFVHHEARVLGAYRRAYYGSAQSPFWFLSKFGPDEKSLVLAARYYLLQAPRLGGAGATYDLQAVKDICATYAIPHDPRPDTLSAASLTSFAAITRFCCTSQYSRGAAAAGFPLYVERRIAADVRETGALEKFIAHDRSCLRVSDREFITYIYLAHFECFSPPRLATHLRAVTTHDPSPAASTEQPSPLGREAVEQFFRHVRAQLNIREYVKQNVTPRETALAGDAAAAYLRARTYAPAALTPAPAYCGVADSSTKMMGRLAEAERLLVPHGWPAFAPTTPGDDAGGGTAAPQTCGIVKRLLKLAATEQQGTTPPAIAALMQDASVQTPLPVYRITMSPTGQAFAAAARDDWARVTRDARPPEATVVADAAAAPEPGALGRRLTRRICARGPALPPGGLAVGGQMYVNRNEIFNAALAVTNIILDLDIALKEPVPFPRLHEALGHFRRGALAAVQLLFPAARVDPDAYPCYFFKSACRPRAPPVCAGDGPSAGGDDGDGDWFPDAGGPGDEEWEEDTDPMDTTHGPLPDDEAAYLDLLHEQIPAATPSEPDSVVCSCADKIGLRVCLPVPAPYVVHGSLTMRGVARVIQQAVLLDRDFVEAVGSHVKNFLLIDTGVYAHGHSLRLPYFAKIGPDGSACGRLLPVFVIPPACEDVPAFVAAHADPRRFHFHAPPMFSAAPREIRVLHSLGGDYVSFFEKKASRNALEHFGRRETLTEVLGRYDVRPDAGETVEGFASELLGRIVACIEAHFPEHAREYQAVSVRRAVIKDDWVLLQLIPGRGALNQSLSCLRFKHGRASRATARTFLALSVGTNNRLCASLCQQCFATKCDNNRLHTLFTVDAGTPCSRSAPSSTSRPSSS.

The segment at 694–727 is disordered; that stretch reads DGPSAGGDDGDGDWFPDAGGPGDEEWEEDTDPMD. Residues 715–725 are compositionally biased toward acidic residues; sequence GDEEWEEDTDP. A CHC2-type zinc finger spans residues 995–1035; it reads CLRFKHGRASRATARTFLALSVGTNNRLCASLCQQCFATKC.

The protein belongs to the herpesviridae DNA primase family. Associates with the helicase and the primase-associated factor to form the helicase-primase factor.

The protein localises to the host nucleus. Essential component of the helicase/primase complex. Unwinds the DNA at the replication forks and generates single-stranded DNA for both leading and lagging strand synthesis. The primase initiates primer synthesis and thereby produces large amount of short RNA primers on the lagging strand that the polymerase elongates using dNTPs. The sequence is that of DNA primase from Human herpesvirus 2 (strain HG52) (HHV-2).